The sequence spans 159 residues: Ribosome maturation factor RimP (159 aa).

Belongs to the RimP family.

Its subcellular location is the cytoplasm. Its function is as follows. Required for maturation of 30S ribosomal subunits. The chain is Ribosome maturation factor RimP from Geotalea uraniireducens (strain Rf4) (Geobacter uraniireducens).